Here is a 986-residue protein sequence, read N- to C-terminus: Vacuolar membrane protease (986 aa).

At 1–20 the chain is on the cytoplasmic side; the sequence is MATPRAQKFNPIAFTPGPVT. Residues 21–41 traverse the membrane as a helical segment; sequence LITTIVYLALLIPILVISLVV. Residues 42–392 are Vacuolar-facing; the sequence is PPAPETSPEG…AFAVFRLHTL (351 aa). Residues N53, N116, and N119 are each glycosylated (N-linked (GlcNAc...) asparagine). The Zn(2+) site is built by H175 and D187. E221 functions as the Proton acceptor in the catalytic mechanism. Position 222 (E222) interacts with Zn(2+). N238 is a glycosylation site (N-linked (GlcNAc...) asparagine). The Zn(2+) site is built by E247 and H320. The chain crosses the membrane as a helical span at residues 393–413; sequence FALSVTLLIVAPLVIFITAIV. The Cytoplasmic segment spans residues 414-447; it reads LSKTDRMYLFSMSKSLGGTDERVSLRGLRGLFRT. The chain crosses the membrane as a helical span at residues 448-468; sequence PIILAVATVIPIGLAYLLEKV. The Vacuolar segment spans residues 469–477; it reads NPYIVHSSQ. The helical transmembrane segment at 478–498 threads the bilayer; it reads FSVWSMMISVWIFLAWFLACA. At 499 to 509 the chain is on the cytoplasmic side; sequence ADFFRPSALHR. Residues 510 to 530 traverse the membrane as a helical segment; sequence AYSYTWIFIATWVMLVINTVY. Residues 531–534 are Vacuolar-facing; the sequence is ANQK. A helical transmembrane segment spans residues 535–555; it reads GIAAGYFVFFYFSGSFLATWV. Topologically, residues 556-665 are cytoplasmic; that stretch reads SYLELFALPR…WSWTLPRWTW (110 aa). The interval 595-620 is disordered; that stretch reads ELPSDTGPHAEYPGDADETDPTESTS. A helical transmembrane segment spans residues 666 to 686; that stretch reads VLQLLLLAPIVLILVGQLALF. Residues 687–702 are Vacuolar-facing; sequence LTTSMSQVGSDGVSTF. The helical transmembrane segment at 703 to 723 threads the bilayer; that stretch reads IVYLACAVFTTLLFAPLFPFI. Residues 724–729 are Cytoplasmic-facing; the sequence is HRFTYH. Residues 730 to 750 form a helical membrane-spanning segment; sequence IPTFLFLVFVGTLIYNLVAFP. Topologically, residues 751 to 986 are vacuolar; sequence FSPANRLKMF…VEASHGITIQ (236 aa). 3 N-linked (GlcNAc...) asparagine glycosylation sites follow: N797, N840, and N948.

Belongs to the peptidase M28 family. Requires Zn(2+) as cofactor.

It localises to the vacuole membrane. May be involved in vacuolar sorting and osmoregulation. This is Vacuolar membrane protease from Blastomyces gilchristii (strain SLH14081) (Blastomyces dermatitidis).